The chain runs to 496 residues: Amino-acid acetyltransferase, mitochondrial (496 aa).

The N-acetyltransferase domain maps to 333–493; it reads YHGTDCLTNG…LDVIDSIQPT (161 aa).

It belongs to the acetyltransferase family.

The protein resides in the mitochondrion. It catalyses the reaction L-glutamate + acetyl-CoA = N-acetyl-L-glutamate + CoA + H(+). Its pathway is amino-acid biosynthesis; L-arginine biosynthesis; N(2)-acetyl-L-ornithine from L-glutamate: step 1/4. Its function is as follows. N-acetylglutamate synthase involved in arginine biosynthesis. This chain is Amino-acid acetyltransferase, mitochondrial (arg2), found in Schizosaccharomyces japonicus (strain yFS275 / FY16936) (Fission yeast).